Reading from the N-terminus, the 68-residue chain is Alpha-conotoxin Lp1.4 (68 aa).

The signal sequence occupies residues M1–S21. A propeptide spanning residues F22 to R48 is cleaved from the precursor. Intrachain disulfides connect C50–C56 and C51–C64. Residues S52–P54 form a ser-Xaa-Pro motif, crucial for potent interaction with nAChR region. An Aspartic acid 1-amide modification is found at D65.

It belongs to the conotoxin A superfamily. As to expression, expressed by the venom duct.

It is found in the secreted. Alpha-conotoxins act on postsynaptic membranes, they bind to the nicotinic acetylcholine receptors (nAChR) and thus inhibit them. This toxin inhibits mouse muscle alpha-1-beta-1-gamma-delta (CHRNA1-CHRNB1-CHRNG-CHRND), and weakly rat neuronal alpha-6/alpha-3-beta-2 (CHRNA6/CHRNA3-CHRNB2). This Conus leopardus (Leopard cone) protein is Alpha-conotoxin Lp1.4.